Consider the following 383-residue polypeptide: Chitinase-3-like protein 1 (383 aa).

Positions 1–21 (MGLRAAHTGFVVLVLLQSCAA) are cleaved as a signal peptide. The 362-residue stretch at 22–383 (YKLICYYTSW…SAIKDVLARV (362 aa)) folds into the GH18 domain. Cysteines 26 and 51 form a disulfide. An N-linked (GlcNAc...) asparagine glycan is attached at N60. Chitin is bound by residues 70-71 (EW), 97-100 (GGWN), Y141, 204-207 (LTYD), and R263. An intrachain disulfide couples C300 to C364. Positions 324–338 (QWVAYDDQESVKNKA) are important for AKT1 activation and IL8 production. W352 contacts chitin. N-linked (GlcNAc...) asparagine glycosylation is present at N367.

This sequence belongs to the glycosyl hydrolase 18 family. As to quaternary structure, monomer. In terms of processing, glycosylated. Mammary secretions collected during the non-lactating period.

It localises to the secreted. It is found in the extracellular space. The protein resides in the cytoplasm. The protein localises to the perinuclear region. Its subcellular location is the endoplasmic reticulum. Carbohydrate-binding lectin with a preference for chitin. Has no chitinase activity. May play a role in tissue remodeling and in the capacity of cells to respond to and cope with changes in their environment. Plays a role in T-helper cell type 2 (Th2) inflammatory response and IL-13-induced inflammation, regulating allergen sensitization, inflammatory cell apoptosis, dendritic cell accumulation and M2 macrophage differentiation. Facilitates invasion of pathogenic enteric bacteria into colonic mucosa and lymphoid organs. Mediates activation of AKT1 signaling pathway and subsequent IL8 production in colonic epithelial cells. Regulates antibacterial responses in lung by contributing to macrophage bacterial killing, controlling bacterial dissemination and augmenting host tolerance. Also regulates hyperoxia-induced injury, inflammation and epithelial apoptosis in lung. This is Chitinase-3-like protein 1 (CHI3L1) from Bos taurus (Bovine).